Reading from the N-terminus, the 904-residue chain is Protein translocase subunit SecA (904 aa).

ATP contacts are provided by residues Gln87, 105-109 (GEGKT), and Asp512. The disordered stretch occupies residues 851-904 (LAKQQQLSHESDNSALMSQEEANVAASLERKVGRNDPCPCGSGKKYKQCHGRLQ). Residues 853–871 (KQQQLSHESDNSALMSQEE) show a composition bias toward polar residues. Zn(2+)-binding residues include Cys888, Cys890, Cys899, and His900. Over residues 894 to 904 (KKYKQCHGRLQ) the composition is skewed to basic residues.

The protein belongs to the SecA family. In terms of assembly, monomer and homodimer. Part of the essential Sec protein translocation apparatus which comprises SecA, SecYEG and auxiliary proteins SecDF-YajC and YidC. It depends on Zn(2+) as a cofactor.

Its subcellular location is the cell inner membrane. The protein resides in the cytoplasm. It catalyses the reaction ATP + H2O + cellular proteinSide 1 = ADP + phosphate + cellular proteinSide 2.. Its function is as follows. Part of the Sec protein translocase complex. Interacts with the SecYEG preprotein conducting channel. Has a central role in coupling the hydrolysis of ATP to the transfer of proteins into and across the cell membrane, serving both as a receptor for the preprotein-SecB complex and as an ATP-driven molecular motor driving the stepwise translocation of polypeptide chains across the membrane. The sequence is that of Protein translocase subunit SecA from Yersinia enterocolitica serotype O:8 / biotype 1B (strain NCTC 13174 / 8081).